The following is a 226-amino-acid chain: MTNIKHLAIIMDGNARWAATHNLPKSEGHRAGADKVHELLPEFINLKIPYITLYTFSSENWQRSNTEISFLMRLLNIYLKKELDNLHKNGIKIKVIGRLNLLSDSLQKQINNAIELTKDNNKLTLCIAFSYGSRQEITDACTKIIASGKTEILESDIQNALYDPEMPDVDLLIRPGGVFRISNFLLWQAAYAELYFSQKYWPDFNKEDIINAIDDYSKRKRTFGKR.

Asp12 is an active-site residue. Asp12 lines the Mg(2+) pocket. Substrate contacts are provided by residues 13-16 (GNAR), Trp17, Lys25, His29, and 57-59 (SSE). The active-site Proton acceptor is the Asn60. Substrate is bound by residues Trp61, Arg63, Arg174, and 180 to 182 (RIS). Glu193 serves as a coordination point for Mg(2+).

This sequence belongs to the UPP synthase family. As to quaternary structure, homodimer. It depends on Mg(2+) as a cofactor.

Functionally, catalyzes the condensation of isopentenyl diphosphate (IPP) with allylic pyrophosphates generating different type of terpenoids. The polypeptide is Isoprenyl transferase (Rickettsia bellii (strain RML369-C)).